Consider the following 826-residue polypeptide: Ribonucleoside-diphosphate reductase large subunit (826 aa).

Substrate-binding positions include Thr-171, 186–187 (SC), Gly-217, 387–391 (NLCAE), and 594–598 (PTSGC). A disulfide bridge links Cys-187 with Cys-403. The Proton acceptor role is filled by Asn-387. Cys-389 functions as the Cysteine radical intermediate in the catalytic mechanism. Glu-391 functions as the Proton acceptor in the catalytic mechanism.

This sequence belongs to the ribonucleoside diphosphate reductase large chain family. Heterotetramer composed of a homodimer of the large subunit (R1) and a homodimer of the small subunit (R2). Larger multisubunit protein complex are also active, composed of (R1)n(R2)n.

It catalyses the reaction a 2'-deoxyribonucleoside 5'-diphosphate + [thioredoxin]-disulfide + H2O = a ribonucleoside 5'-diphosphate + [thioredoxin]-dithiol. Its function is as follows. Ribonucleoside-diphosphate reductase holoenzyme provides the precursors necessary for viral DNA synthesis. Allows virus growth in non-dividing cells, as well as reactivation from latency in infected hosts. Catalyzes the biosynthesis of deoxyribonucleotides from the corresponding ribonucleotides. In Epstein-Barr virus (strain GD1) (HHV-4), this protein is Ribonucleoside-diphosphate reductase large subunit.